A 298-amino-acid polypeptide reads, in one-letter code: WRKY transcription factor 22 (298 aa).

Disordered stretches follow at residues 75–116 (EEPR…IQHK) and 181–220 (AEHNHPAPTHRNSLAGSTRQKPSDQQTSKSPTTTIATYSS). Positions 88–103 (SLSASSGSVTSKPSGS) are enriched in low complexity. The segment covering 107-116 (RSKRRKIQHK) has biased composition (basic residues). A DNA-binding region (WRKY) is located at residues 122–188 (AAEALNSDVW…YTAEHNHPAP (67 aa)). The span at 190 to 220 (HRNSLAGSTRQKPSDQQTSKSPTTTIATYSS) shows a compositional bias: polar residues.

It belongs to the WRKY group II-e family.

It is found in the nucleus. Its function is as follows. Transcription factor involved in the expression of defense genes in innate immune response of plants. Interacts specifically with the W box (5'-(T)TGAC[CT]-3'), a frequently occurring elicitor-responsive cis-acting element. Activates WRKY 29, SIRK and its own promoters. The polypeptide is WRKY transcription factor 22 (WRKY22) (Arabidopsis thaliana (Mouse-ear cress)).